Here is a 630-residue protein sequence, read N- to C-terminus: Lysophospholipase 3 (630 aa).

The signal sequence occupies residues Met-1–Ala-16. One can recognise a PLA2c domain in the interval Ser-39–Asp-587. Residues Asn-56, Asn-95, Asn-164, Asn-220, Asn-283, Asn-351, Asn-390, Asn-443, Asn-456, Asn-462, Asn-493, Asn-514, Asn-542, Asn-566, and Asn-583 are each glycosylated (N-linked (GlcNAc...) asparagine). A lipid anchor (GPI-like-anchor amidated asparagine) is attached at Asn-606. Residues Ala-607–Ala-630 constitute a propeptide, removed in mature form.

This sequence belongs to the lysophospholipase family. The GPI-like anchor contains a phosphoceramide lipid group.

The protein localises to the cell membrane. The catalysed reaction is a 1-acyl-sn-glycero-3-phosphocholine + H2O = sn-glycerol 3-phosphocholine + a fatty acid + H(+). Catalyzes the release of fatty acids from lysophospholipids. This Aspergillus fumigatus (strain CBS 144.89 / FGSC A1163 / CEA10) (Neosartorya fumigata) protein is Lysophospholipase 3 (plb3).